Here is a 178-residue protein sequence, read N- to C-terminus: Ribosome maturation factor RimP (178 aa).

The protein belongs to the RimP family.

The protein localises to the cytoplasm. Its function is as follows. Required for maturation of 30S ribosomal subunits. This Mycolicibacterium gilvum (strain PYR-GCK) (Mycobacterium gilvum (strain PYR-GCK)) protein is Ribosome maturation factor RimP.